We begin with the raw amino-acid sequence, 39 residues long: Photosystem II reaction center protein X (39 aa).

The helical transmembrane segment at 10-30 threads the bilayer; it reads WSLLWGTAIVVIPVTVGLIFI.

Belongs to the PsbX family. Type 1 subfamily. PSII is composed of 1 copy each of membrane proteins PsbA, PsbB, PsbC, PsbD, PsbE, PsbF, PsbH, PsbI, PsbJ, PsbK, PsbL, PsbM, PsbT, PsbX, PsbY, PsbZ, Psb30/Ycf12, peripheral proteins PsbO, CyanoQ (PsbQ), PsbU, PsbV and a large number of cofactors. It forms dimeric complexes.

The protein localises to the cellular thylakoid membrane. Functionally, involved in the binding and/or turnover of quinones at the Q(B) site of photosystem II (PSII). PSII is a light-driven water plastoquinone oxidoreductase, using light energy to abstract electrons from H(2)O, generating a proton gradient subsequently used for ATP formation. This chain is Photosystem II reaction center protein X, found in Nostoc punctiforme (strain ATCC 29133 / PCC 73102).